Here is a 290-residue protein sequence, read N- to C-terminus: Fructose-bisphosphate aldolase (290 aa).

A D-glyceraldehyde 3-phosphate-binding site is contributed by Ser-51. The active-site Proton donor is the Asp-86. Zn(2+)-binding residues include His-87, Asp-107, Glu-137, and His-179. Dihydroxyacetone phosphate is bound at residue Gly-180. His-208 is a binding site for Zn(2+). Residues Gly-209–Ser-211 and Asn-230–Thr-233 each bind dihydroxyacetone phosphate.

Belongs to the class II fructose-bisphosphate aldolase family. As to quaternary structure, homodimer. The cofactor is Zn(2+).

The catalysed reaction is beta-D-fructose 1,6-bisphosphate = D-glyceraldehyde 3-phosphate + dihydroxyacetone phosphate. The protein operates within carbohydrate degradation; glycolysis; D-glyceraldehyde 3-phosphate and glycerone phosphate from D-glucose: step 4/4. Its function is as follows. Catalyzes the aldol condensation of dihydroxyacetone phosphate (DHAP or glycerone-phosphate) with glyceraldehyde 3-phosphate (G3P) to form fructose 1,6-bisphosphate (FBP) in gluconeogenesis and the reverse reaction in glycolysis. The polypeptide is Fructose-bisphosphate aldolase (fba) (Ureaplasma parvum serovar 3 (strain ATCC 700970)).